Here is a 102-residue protein sequence, read N- to C-terminus: Small ribosomal subunit protein eS24 (102 aa).

It belongs to the eukaryotic ribosomal protein eS24 family.

This Haloarcula marismortui (strain ATCC 43049 / DSM 3752 / JCM 8966 / VKM B-1809) (Halobacterium marismortui) protein is Small ribosomal subunit protein eS24 (rps24e).